The sequence spans 544 residues: Chaperonin GroEL (544 aa).

ATP is bound by residues Thr-30–Pro-33, Lys-51, Asp-87–Thr-91, Gly-415, and Asp-495.

Belongs to the chaperonin (HSP60) family. In terms of assembly, forms a cylinder of 14 subunits composed of two heptameric rings stacked back-to-back. Interacts with the co-chaperonin GroES.

Its subcellular location is the cytoplasm. The enzyme catalyses ATP + H2O + a folded polypeptide = ADP + phosphate + an unfolded polypeptide.. Together with its co-chaperonin GroES, plays an essential role in assisting protein folding. The GroEL-GroES system forms a nano-cage that allows encapsulation of the non-native substrate proteins and provides a physical environment optimized to promote and accelerate protein folding. The protein is Chaperonin GroEL of Aeromonas salmonicida (strain A449).